Consider the following 501-residue polypeptide: Aspartate--tRNA ligase, cytoplasmic (501 aa).

Position 52 is a phosphothreonine (T52). K74 is subject to N6-acetyllysine. E229 lines the L-aspartate pocket. At S249 the chain carries Phosphoserine. Residues 251–254 (QLYK) form an aspartate region. Residue R273 coordinates L-aspartate. Residues 273 to 275 (RAE) and 281 to 283 (RHL) contribute to the ATP site. N6-acetyllysine is present on K374. ATP is bound at residue E424. L-aspartate contacts are provided by S427 and R431. 472-475 (GLER) is an ATP binding site.

Belongs to the class-II aminoacyl-tRNA synthetase family. Type 2 subfamily. In terms of assembly, homodimer. Part of a multisubunit complex that groups tRNA ligases for Arg (RARS1), Asp (DARS1), Gln (QARS1), Ile (IARS1), Leu (LARS1), Lys (KARS1), Met (MARS1) the bifunctional ligase for Glu and Pro (EPRS1) and the auxiliary subunits AIMP1/p43, AIMP2/p38 and EEF1E1/p18.

The protein localises to the cytoplasm. The catalysed reaction is tRNA(Asp) + L-aspartate + ATP = L-aspartyl-tRNA(Asp) + AMP + diphosphate. Functionally, catalyzes the specific attachment of an amino acid to its cognate tRNA in a 2 step reaction: the amino acid (AA) is first activated by ATP to form AA-AMP and then transferred to the acceptor end of the tRNA. This chain is Aspartate--tRNA ligase, cytoplasmic (Dars1), found in Mus musculus (Mouse).